Consider the following 356-residue polypeptide: Septin-2A (356 aa).

The Septin-type G domain occupies 33 to 305 (KGFEFTLMVV…ENFRSERLKK (273 aa)). Positions 43–50 (GESGLGKS) are G1 motif. Residues 43–50 (GESGLGKS), T77, G103, 182–190 (KADTLTLRE), G240, and R255 contribute to the GTP site. Residues 100-103 (DTPG) form a G3 motif region. The G4 motif stretch occupies residues 181 to 184 (AKAD). An important for dimerization region spans residues 259–269 (WGVVEVENTEH).

This sequence belongs to the TRAFAC class TrmE-Era-EngA-EngB-Septin-like GTPase superfamily. Septin GTPase family. Septins polymerize into heterooligomeric protein complexes that form filaments, and associate with cellular membranes, actin filaments and microtubules. GTPase activity is required for filament formation. Can form heterooligomers with other family members and form filaments. Interacts with wdpcp.

It localises to the cytoplasm. Its subcellular location is the cytoskeleton. It is found in the spindle. The protein localises to the cleavage furrow. The protein resides in the midbody. It localises to the cell projection. Its subcellular location is the cilium membrane. Filament-forming cytoskeletal GTPase. Required for normal organization of the actin cytoskeleton. Plays a role in the biogenesis of polarized columnar-shaped epithelium. Required for the progression through mitosis through regulation of chromosome congression. During anaphase, may be required for chromosome segregation and spindle elongation. Probably plays a role in ciliogenesis and collective cell movements including convergent extension during gastrulation. In cilia, required for the integrity of the diffusion barrier at the base of the primary cilium that prevents diffusion of transmembrane proteins between the cilia and plasma membranes. Controls cell shape and not polarization of cells during convergent extension. The sequence is that of Septin-2A (sept2-a) from Xenopus laevis (African clawed frog).